The primary structure comprises 139 residues: Putative pre-16S rRNA nuclease (139 aa).

It belongs to the YqgF nuclease family.

Its subcellular location is the cytoplasm. Its function is as follows. Could be a nuclease involved in processing of the 5'-end of pre-16S rRNA. This is Putative pre-16S rRNA nuclease from Legionella pneumophila subsp. pneumophila (strain Philadelphia 1 / ATCC 33152 / DSM 7513).